The sequence spans 360 residues: Histidinol-phosphate aminotransferase (360 aa).

Lys222 is modified (N6-(pyridoxal phosphate)lysine).

The protein belongs to the class-II pyridoxal-phosphate-dependent aminotransferase family. Histidinol-phosphate aminotransferase subfamily. In terms of assembly, homodimer. The cofactor is pyridoxal 5'-phosphate.

The enzyme catalyses L-histidinol phosphate + 2-oxoglutarate = 3-(imidazol-4-yl)-2-oxopropyl phosphate + L-glutamate. It participates in amino-acid biosynthesis; L-histidine biosynthesis; L-histidine from 5-phospho-alpha-D-ribose 1-diphosphate: step 7/9. The chain is Histidinol-phosphate aminotransferase from Listeria monocytogenes serotype 4b (strain F2365).